The primary structure comprises 256 residues: Hemin import ATP-binding protein HmuV (256 aa).

Residues 2 to 238 (ISAQNLVYSL…QALTMLYGAD (237 aa)) enclose the ABC transporter domain. 34–41 (GPNGAGKS) is a binding site for ATP.

This sequence belongs to the ABC transporter superfamily. Heme (hemin) importer (TC 3.A.1.14.5) family. In terms of assembly, the complex is composed of two ATP-binding proteins (HmuV), two transmembrane proteins (HmuU) and a solute-binding protein (HmuT).

Its subcellular location is the cell inner membrane. In terms of biological role, part of the ABC transporter complex HmuTUV involved in hemin import. Responsible for energy coupling to the transport system. This chain is Hemin import ATP-binding protein HmuV, found in Escherichia coli O6:K15:H31 (strain 536 / UPEC).